A 3312-amino-acid chain; its full sequence is Cadherin EGF LAG seven-pass G-type receptor 3 (3312 aa).

The N-terminal stretch at 1–32 (MMARRPPWRGLGGRSTPILLLLLLSLFPLSQE) is a signal peptide. At 33-2540 (ELGGGGHQGW…RLEGDLELLA (2508 aa)) the chain is on the extracellular side. Disordered stretches follow at residues 90–112 (GRRQ…LGIE), 143–199 (GRTG…RKRV), and 212–306 (GSKG…EARK). Positions 159 to 173 (SSGVPGSGNSSPLPS) are enriched in low complexity. A compositionally biased stretch (pro residues) spans 290-299 (RPGPRPPGLP). Cadherin domains are found at residues 326-433 (PQYN…SPVF), 434-545 (EQAQ…APQF), 546-651 (SEKR…IPIF), 652-756 (VSTP…RPEF), 757-858 (TMKE…RPVF), 859-961 (QSAH…APQF), 962-1067 (VASH…APVF), 1068-1169 (PAEE…SPVL), and 1170-1265 (NNFQ…RVVI). A glycan (N-linked (GlcNAc...) asparagine) is linked at asparagine 632. N-linked (GlcNAc...) asparagine glycosylation is present at asparagine 847. N-linked (GlcNAc...) asparagine glycosylation is found at asparagine 1182, asparagine 1222, asparagine 1317, and asparagine 1327. The region spanning 1375–1433 (DDNVCLREPCENYMKCVSVLRFDSSAPFLASASTLFRPIQPIAGLRCRCPPGFTGDFCE) is the EGF-like 1; calcium-binding domain. 9 disulfide bridges follow: cysteine 1379-cysteine 1390, cysteine 1384-cysteine 1421, cysteine 1423-cysteine 1432, cysteine 1439-cysteine 1450, cysteine 1444-cysteine 1459, cysteine 1461-cysteine 1470, cysteine 1479-cysteine 1490, cysteine 1484-cysteine 1500, and cysteine 1502-cysteine 1513. In terms of domain architecture, EGF-like 2; calcium-binding spans 1435-1471 (ELDLCYSNPCRNGGACARREGGYTCVCRPRFTGEDCE). An EGF-like 3; calcium-binding domain is found at 1475–1514 (EAGRCVPGVCRNGGTCTDAPNGGFRCQCPAGGAFEGPRCE). Residues 1515–1719 (VAARSFPPSS…VANNGTMAGC (205 aa)) enclose the Laminin G-like 1 domain. N-linked (GlcNAc...) asparagine glycosylation is found at asparagine 1649 and asparagine 1713. 4 disulfides stabilise this stretch: cysteine 1693/cysteine 1719, cysteine 1726/cysteine 1737, cysteine 1731/cysteine 1746, and cysteine 1748/cysteine 1757. An EGF-like 4; calcium-binding domain is found at 1722–1758 (KLHFCDSGPCKNSGFCSERWGSFSCDCPVGFGGKDCQ). The Laminin G-like 2 domain occupies 1764–1944 (PHHFRGNGTL…SHRVNAEPGC (181 aa)). Asparagine 1770 is a glycosylation site (N-linked (GlcNAc...) asparagine). 9 disulfides stabilise this stretch: cysteine 1915-cysteine 1944, cysteine 1950-cysteine 1961, cysteine 1955-cysteine 1970, cysteine 1972-cysteine 1981, cysteine 1985-cysteine 1996, cysteine 1990-cysteine 2008, cysteine 2010-cysteine 2019, cysteine 2027-cysteine 2040, and cysteine 2042-cysteine 2052. In terms of domain architecture, EGF-like 5; calcium-binding spans 1946–1982 (VTNACASGPCPPHADCRDLWQTFSCTCQPGYYGPGCV). Residue aspartate 1963 is modified to (3R)-3-hydroxyaspartate. In terms of domain architecture, EGF-like 6; calcium-binding spans 1983–2020 (DACLLNPCQNQGSCRHLPGAPHGYTCDCVGGYFGHHCE). The 33-residue stretch at 2021-2053 (HRMDQQCPRGWWGSPTCGPCNCDVHKGFDPNCN) folds into the EGF-like 7; calcium-binding domain. N-linked (GlcNAc...) asparagine glycosylation is present at asparagine 2053. Positions 2055–2090 (TNGQCHCKEFHYRPRGSDSCLPCDCYPVGSTSRSCA) constitute an EGF-like 8; calcium-binding domain. Disulfide bonds link cysteine 2059/cysteine 2074, cysteine 2061/cysteine 2077, cysteine 2079/cysteine 2089, cysteine 2098/cysteine 2107, and cysteine 2110/cysteine 2122. Positions 2077 to 2124 (CDCYPVGSTSRSCAPHSGQCPCRPGALGRQCNSCDSPFAEVTASGCRV) constitute a Laminin EGF-like domain. The residue at position 2126 (tyrosine 2126) is a Phosphotyrosine. Asparagine 2177, asparagine 2196, asparagine 2386, asparagine 2474, and asparagine 2506 each carry an N-linked (GlcNAc...) asparagine glycan. The disordered stretch occupies residues 2361-2399 (THVLLPSQSPRPSPSEVLPTSSSIENSTTSSVVPPPAPP). The region spanning 2368–2530 (QSPRPSPSEV…GVLMDASPRE (163 aa)) is the GAIN-B domain. A compositionally biased stretch (low complexity) spans 2380–2391 (TSSSIENSTTSS). 2 disulfides stabilise this stretch: cysteine 2480-cysteine 2512 and cysteine 2500-cysteine 2514. Positions 2480–2530 (CVQWDPPGLAEQHGVWTARDCELVHRNGSHARCRCSRTGTFGVLMDASPRE) are GPS. Residues 2541–2561 (VFTHVVVAVSVAALVLTAAIL) traverse the membrane as a helical segment. At 2562-2572 (LSLRSLKSNVR) the chain is on the cytoplasmic side. A helical transmembrane segment spans residues 2573-2593 (GIHANVAAALGVAELLFLLGI). Topologically, residues 2594-2601 (HRTHNQLV) are extracellular. The chain crosses the membrane as a helical span at residues 2602-2622 (CTAVAILLHYFFLSTFAWLFV). Over 2623 to 2643 (QGLHLYRMQVEPRNVDRGAMR) the chain is Cytoplasmic. The chain crosses the membrane as a helical span at residues 2644 to 2664 (FYHALGWGVPAVLLGLAVGLD). Residues 2665–2681 (PEGYGNPDFCWISVHEP) lie on the Extracellular side of the membrane. The chain crosses the membrane as a helical span at residues 2682-2702 (LIWSFAGPVVLVIVMNGTMFL). The Cytoplasmic portion of the chain corresponds to 2703–2725 (LAARTSCSTGQREAKKTSALTLR). A helical transmembrane segment spans residues 2726–2746 (SSFLLLLLVSASWLFGLLAVN). Topologically, residues 2747-2753 (HSILAFH) are extracellular. The helical transmembrane segment at 2754 to 2774 (YLHAGLCGLQGLAVLLLFCVL) threads the bilayer. The Cytoplasmic segment spans residues 2775–3312 (NADARAAWMP…SEVPRSEGHS (538 aa)). Disordered stretches follow at residues 2888 to 2927 (AGAD…QRPL) and 2978 to 3006 (TSKD…AQRQ). Acidic residues predominate over residues 2890-2900 (ADSDSDSDLSL). Tyrosine 3051 is modified (phosphotyrosine). Disordered stretches follow at residues 3086 to 3243 (EEAP…TEQL) and 3256 to 3312 (SALS…EGHS). Serine 3097 bears the Phosphoserine mark. 3 stretches are compositionally biased toward low complexity: residues 3175-3198 (SPQR…SRSS), 3256-3265 (SALSSVQSSS), and 3272-3281 (TTATPSATAS). Positions 3287–3300 (TPRSATSHSISELS) are enriched in polar residues.

The protein belongs to the G-protein coupled receptor 2 family. LN-TM7 subfamily.

It localises to the cell membrane. Its function is as follows. Receptor that may have an important role in cell/cell signaling during nervous system formation. This is Cadherin EGF LAG seven-pass G-type receptor 3 (CELSR3) from Homo sapiens (Human).